Reading from the N-terminus, the 519-residue chain is tRNA-2-methylthio-N(6)-dimethylallyladenosine synthase (519 aa).

The disordered stretch occupies residues Met-1–Lys-23. Positions Lys-7–Ala-17 are enriched in polar residues. The MTTase N-terminal domain maps to Lys-76–Phe-194. [4Fe-4S] cluster contacts are provided by Cys-85, Cys-121, Cys-155, Cys-231, Cys-235, and Cys-238. Positions Arg-217 to Lys-450 constitute a Radical SAM core domain. Residues Lys-450 to Glu-513 form the TRAM domain.

The protein belongs to the methylthiotransferase family. MiaB subfamily. In terms of assembly, monomer. The cofactor is [4Fe-4S] cluster.

It localises to the cytoplasm. It carries out the reaction N(6)-dimethylallyladenosine(37) in tRNA + (sulfur carrier)-SH + AH2 + 2 S-adenosyl-L-methionine = 2-methylsulfanyl-N(6)-dimethylallyladenosine(37) in tRNA + (sulfur carrier)-H + 5'-deoxyadenosine + L-methionine + A + S-adenosyl-L-homocysteine + 2 H(+). Its function is as follows. Catalyzes the methylthiolation of N6-(dimethylallyl)adenosine (i(6)A), leading to the formation of 2-methylthio-N6-(dimethylallyl)adenosine (ms(2)i(6)A) at position 37 in tRNAs that read codons beginning with uridine. The protein is tRNA-2-methylthio-N(6)-dimethylallyladenosine synthase of Oceanobacillus iheyensis (strain DSM 14371 / CIP 107618 / JCM 11309 / KCTC 3954 / HTE831).